We begin with the raw amino-acid sequence, 554 residues long: 2-succinyl-5-enolpyruvyl-6-hydroxy-3-cyclohexene-1-carboxylate synthase (554 aa).

It belongs to the TPP enzyme family. MenD subfamily. As to quaternary structure, homodimer. Mg(2+) is required as a cofactor. Mn(2+) serves as cofactor. Requires thiamine diphosphate as cofactor.

The catalysed reaction is isochorismate + 2-oxoglutarate + H(+) = 5-enolpyruvoyl-6-hydroxy-2-succinyl-cyclohex-3-ene-1-carboxylate + CO2. It participates in quinol/quinone metabolism; 1,4-dihydroxy-2-naphthoate biosynthesis; 1,4-dihydroxy-2-naphthoate from chorismate: step 2/7. The protein operates within quinol/quinone metabolism; menaquinone biosynthesis. Its function is as follows. Catalyzes the thiamine diphosphate-dependent decarboxylation of 2-oxoglutarate and the subsequent addition of the resulting succinic semialdehyde-thiamine pyrophosphate anion to isochorismate to yield 2-succinyl-5-enolpyruvyl-6-hydroxy-3-cyclohexene-1-carboxylate (SEPHCHC). In Renibacterium salmoninarum (strain ATCC 33209 / DSM 20767 / JCM 11484 / NBRC 15589 / NCIMB 2235), this protein is 2-succinyl-5-enolpyruvyl-6-hydroxy-3-cyclohexene-1-carboxylate synthase.